We begin with the raw amino-acid sequence, 779 residues long: Endoribonuclease YSH1 (779 aa).

Histidine 68, histidine 70, aspartate 72, histidine 73, histidine 163, and aspartate 184 together coordinate Zn(2+). Catalysis depends on histidine 408, which acts as the Proton donor. Histidine 430 is a Zn(2+) binding site. Residue serine 517 is modified to Phosphoserine; by ATM or ATR.

Belongs to the metallo-beta-lactamase superfamily. RNA-metabolizing metallo-beta-lactamase-like family. CPSF2/YSH1 subfamily. In terms of assembly, component of the cleavage and polyadenylation factor (CPF) complex, which is composed of at least PTI1, SYC1, SSU72, GLC7, MPE1, REF2, PFS2, PTA1, YSH1/BRR5, SWD2, CFT2/YDH1, YTH1, CFT1/YHH1, FIP1 and PAP1. Interacts with FIP1, PFS2, RNA14 and YTH1. The cofactor is Zn(2+).

The protein resides in the nucleus. Component of the cleavage and polyadenylation factor (CPF) complex, which plays a key role in polyadenylation-dependent pre-mRNA 3'-end formation and cooperates with cleavage factors including the CFIA complex and NAB4/CFIB. Has endonuclease activity. In Saccharomyces cerevisiae (strain ATCC 204508 / S288c) (Baker's yeast), this protein is Endoribonuclease YSH1 (YSH1).